Here is a 106-residue protein sequence, read N- to C-terminus: Ig kappa chain C region, B allele (106 aa).

Residues 5–102 (PTVSIFPPST…SSSPVVKSFN (98 aa)) enclose the Ig-like domain. The cysteines at positions 26 and 86 are disulfide-linked.

The sequence is that of Ig kappa chain C region, B allele from Rattus norvegicus (Rat).